Consider the following 105-residue polypeptide: ESAT-6-like protein EsxU (105 aa).

It belongs to the WXG100 family. CFP-10 subfamily. Forms a tight 1:1 complex with EsxT. Complex formation results in induction of alpha-helical conformation and stability against chemical denaturation.

Its subcellular location is the secreted. The protein is ESAT-6-like protein EsxU of Mycobacterium tuberculosis (strain ATCC 25618 / H37Rv).